A 252-amino-acid polypeptide reads, in one-letter code: Triosephosphate isomerase (252 aa).

Residue 9–11 (NWK) participates in substrate binding. Residue His-98 is the Electrophile of the active site. Residue Glu-170 is the Proton acceptor of the active site. Residues Gly-176 and Ser-215 each contribute to the substrate site.

The protein belongs to the triosephosphate isomerase family. As to quaternary structure, homodimer.

It is found in the cytoplasm. It catalyses the reaction D-glyceraldehyde 3-phosphate = dihydroxyacetone phosphate. The protein operates within carbohydrate biosynthesis; gluconeogenesis. Its pathway is carbohydrate degradation; glycolysis; D-glyceraldehyde 3-phosphate from glycerone phosphate: step 1/1. Functionally, involved in the gluconeogenesis. Catalyzes stereospecifically the conversion of dihydroxyacetone phosphate (DHAP) to D-glyceraldehyde-3-phosphate (G3P). This chain is Triosephosphate isomerase, found in Buchnera aphidicola subsp. Baizongia pistaciae (strain Bp).